The following is a 1097-amino-acid chain: Importin-5 (1097 aa).

Position 2 is an N-acetylalanine (Ala-2). HEAT repeat units follow at residues 5 to 38, 43 to 77, 95 to 122, 130 to 157, 167 to 201, 210 to 246, 254 to 289, 298 to 350, 352 to 386, 390 to 430, 432 to 472, 475 to 523, 525 to 568, 570 to 615, 617 to 692, 695 to 737, 741 to 780, 787 to 853, 856 to 895, 903 to 935, 943 to 983, 990 to 1021, 1032 to 1067, and 1070 to 1093; these read AAEQQQFYLLLGNLLSPDNVVRKQAEETYENIPG, TFLLQAIRNTTAAEEARQMAAVLLRRLLSSAFDEV, MIIQMETQSSMRKKVCDIAAELARNLID, PEGLKFLFDSVSSQNVGLREAALHIFWN, QHYLDVIKRMLVQCMQDQEHPSIRTLSARATAAFI, LFKHFADLLPGFLQAVNDSCYQNDDSVLKSLVEIADT, HLEATLQLSLKLCGDTSLNNMQRQLALEVIVTLSET, TNIV…ACGL, GKLVLPMIKEHIMQMLQNPDWKYRHAGLMALSAIG, HQQM…ATDF, PGFQ…FTED, KSLL…ADTA, EKFV…GLAV, KEKF…CKIL, KEFQ…AKEL, GFVE…ARVR, YLTQMWHFMCDALIKAIGTEPDSDVLSEIMHSFAKCIEVM, NEHF…FSSY, KVLPWFEQLLPLIVNLICPHRPWPDRQWGLCIFDDVIEHC, AEYFLRPMLQYVCDNSPEVRQAAAYGLGVMAQY, FCTE…MKFK, EEVLPHWLSWLPLHEDKEEAVQTFNYLCDLIE, NTNLPKIFSIIAEGEMHEAIKHEDPCAKRLANVVRQ, and TSGGLWTECIAQLSPEQQAAIQEL. The region spanning 28–99 is the Importin N-terminal domain; that stretch reads QAEETYENIP…KSELLMIIQM (72 aa). The segment at 325-375 is ran-GTP binding; the sequence is DELEDDDFDSNAVAGESALDRMACGLGGKLVLPMIKEHIMQMLQNPDWKYR. Ser-827 bears the Phosphoserine mark.

Belongs to the importin beta family. Importin beta-3 subfamily. As to quaternary structure, interacts with RPS7 and RPL5. Interacts with RPL23A (via BIB domain). Interacts with H2A, H2B, H3 and H4 histones. Interacts with CPEB3; this mediates CPEB3 nuclear import following neuronal stimulation which enhances the interaction in a RAN-regulated manner. Interacts with AIFM2; this interaction likely mediates the translocation of AIFM2 into the nucleus upon oxidative stress. Interacts with STX3 (isoform 3). Interacts with SRP19. In terms of assembly, (Microbial infection) Interacts with HIV-1 Rev.

Its subcellular location is the cytoplasm. It is found in the nucleus. The protein resides in the nucleolus. Functions in nuclear protein import as nuclear transport receptor. Serves as receptor for nuclear localization signals (NLS) in cargo substrates. Is thought to mediate docking of the importin/substrate complex to the nuclear pore complex (NPC) through binding to nucleoporin and the complex is subsequently translocated through the pore by an energy requiring, Ran-dependent mechanism. At the nucleoplasmic side of the NPC, Ran binds to the importin, the importin/substrate complex dissociates and importin is re-exported from the nucleus to the cytoplasm where GTP hydrolysis releases Ran. The directionality of nuclear import is thought to be conferred by an asymmetric distribution of the GTP- and GDP-bound forms of Ran between the cytoplasm and nucleus. Mediates the nuclear import of ribosomal proteins RPL23A, RPS7 and RPL5. In vitro, mediates nuclear import of H2A, H2B, H3 and H4 histones. Binds to CPEB3 and mediates its nuclear import following neuronal stimulation. In case of HIV-1 infection, binds and mediates the nuclear import of HIV-1 Rev. The chain is Importin-5 (IPO5) from Homo sapiens (Human).